The chain runs to 49 residues: uncharacterized protein (49 aa).

The protein belongs to the metallo-dependent hydrolases superfamily. TatD-type hydrolase family. The cofactor is a divalent metal cation.

This is an uncharacterized protein from Geobacillus stearothermophilus (Bacillus stearothermophilus).